A 403-amino-acid polypeptide reads, in one-letter code: MSSDTSRRDHAAMAVREVLAGDRKVGTVSRSARRRRLELRRLGRTASAVAEDDAAKRVRPASDSSSDSSESAKVAPEPTAEVARWPACVSHGAVSVIGRRREMEDAIFVAAPFLAASKEAAVEGSGVAEEEGKEEDEGFFAVYDGHGGSRVAEACRERMHVVLAEEVRVRRLLQGGGGGADVEDEDRARWKEAMAACFTRVDGEVGGAEEADTGEQTVGSTAVVAVVGPRRIVVANCGDSRAVLSRGGVAVPLSSDHKPDRPDEMERVEAAGGRVINWNGYRILGVLATSRSIGDYYLKPYVIAEPEVTVMDRTDKDEFLILASDGLWDVVSNDVACKIARNCLSGRAASKYPESVSGSTAADAAALLVELAISRGSKDNISVVVVELRRLRSRTTASKENGR.

The tract at residues 42 to 80 (LGRTASAVAEDDAAKRVRPASDSSSDSSESAKVAPEPTA) is disordered. A compositionally biased stretch (low complexity) spans 62-71 (SDSSSDSSES). Positions 90 to 388 (SHGAVSVIGR…DNISVVVVEL (299 aa)) constitute a PPM-type phosphatase domain. Mn(2+) is bound by residues Asp144, Gly145, Asp325, and Asp379.

The protein belongs to the PP2C family. Mg(2+) is required as a cofactor. Mn(2+) serves as cofactor.

It carries out the reaction O-phospho-L-seryl-[protein] + H2O = L-seryl-[protein] + phosphate. It catalyses the reaction O-phospho-L-threonyl-[protein] + H2O = L-threonyl-[protein] + phosphate. This Oryza sativa subsp. japonica (Rice) protein is Probable protein phosphatase 2C 8.